We begin with the raw amino-acid sequence, 2062 residues long: Ankyrin repeat domain-containing protein 12 (2062 aa).

Disordered stretches follow at residues 1 to 119 (MPKS…GNKK) and 145 to 188 (ARDN…GETP). Residues 9 to 20 (PIQSENSDSDSN) are compositionally biased toward polar residues. 2 stretches are compositionally biased toward basic and acidic residues: residues 41–57 (PKIE…EKSS) and 100–117 (YSEK…EAGN). Over residues 145-172 (ARDNSPDSTPNHPSQTTPAQKKTPSSSS) the composition is skewed to polar residues. Position 149 is a phosphoserine (Ser-149). Over residues 173 to 187 (RQKDKVNKRNERGET) the composition is skewed to basic and acidic residues. 3 ANK repeats span residues 184–213 (RGET…NVNV), 217–246 (AGWT…DVNT), and 250–280 (DDDT…PFQA). 8 disordered regions span residues 301 to 338 (KREV…TEKD), 409 to 501 (KSFK…TRIT), 538 to 577 (ISTG…MSLQ), 609 to 683 (QKDF…DSAK), 727 to 788 (EKNI…FTSL), 812 to 1073 (EKHI…LVND), 1097 to 1227 (KHKE…RPPV), and 1328 to 1350 (EESN…KPEV). The span at 306–318 (LSDDDESYTDSEE) shows a compositional bias: acidic residues. Polar residues-rich tracts occupy residues 319 to 328 (AQSVNPSSVD) and 437 to 454 (KKIS…NSDM). The segment covering 455-467 (QTKKEYVVSGEHK) has biased composition (basic and acidic residues). The segment covering 468 to 480 (QKGKVKRKLKNQN) has biased composition (basic residues). Over residues 481–498 (KNKENQELKQEKEGKENT) the composition is skewed to basic and acidic residues. Ser-543 bears the Phosphoserine mark. Residues 565–575 (TCLSPGSSEMS) are compositionally biased toward polar residues. 8 stretches are compositionally biased toward basic and acidic residues: residues 609 to 631 (QKDF…DHSP), 639 to 649 (TLKKMDKEGKT), 658 to 683 (KERE…DSAK), 727 to 784 (EKNI…KDSE), 812 to 969 (EKHI…DKES), 977 to 1037 (HIQE…KDKI), 1061 to 1072 (KDTRPKEKRLVN), and 1103 to 1157 (KQKE…KQPK). Residue Ser-630 is modified to Phosphoserine. Ser-861 carries the phosphoserine modification. A compositionally biased stretch (polar residues) spans 1161–1189 (SNRSQSVDTKNVMTLGKSSFVSDNSLNRS). Over residues 1200 to 1213 (SSRSVSMISVASSE) the composition is skewed to low complexity. The span at 1328–1344 (EESNQGSLLTVPGDTSP) shows a compositional bias: polar residues. Ser-1401 carries the phosphoserine modification. 2 disordered regions span residues 1721–1744 (NAED…NTMA) and 1756–1795 (LLSE…VPQP). The segment covering 1729–1744 (NQIPQRMTRNKANTMA) has biased composition (polar residues).

In terms of assembly, interacts with the PAS region of the p160 coactivators.

The protein resides in the nucleus. May recruit HDACs to the p160 coactivators/nuclear receptor complex to inhibit ligand-dependent transactivation. In Homo sapiens (Human), this protein is Ankyrin repeat domain-containing protein 12 (ANKRD12).